The chain runs to 250 residues: Probable cytokinin riboside 5'-monophosphate phosphoribohydrolase LOGL6 (250 aa).

Substrate is bound by residues glutamate 98, 116-117 (RK), and 133-139 (GYGTLEE).

Belongs to the LOG family. Expressed in roots, leaves, stems, tiller buds, shoot apex, immature inflorescences and flowers.

The catalysed reaction is N(6)-(dimethylallyl)adenosine 5'-phosphate + H2O = N(6)-dimethylallyladenine + D-ribose 5-phosphate. It carries out the reaction 9-ribosyl-trans-zeatin 5'-phosphate + H2O = trans-zeatin + D-ribose 5-phosphate. Functionally, cytokinin-activating enzyme working in the direct activation pathway. Phosphoribohydrolase that converts inactive cytokinin nucleotides to the biologically active free-base forms. This chain is Probable cytokinin riboside 5'-monophosphate phosphoribohydrolase LOGL6 (LOGL6), found in Oryza sativa subsp. japonica (Rice).